The sequence spans 536 residues: CTP synthase (536 aa).

Residues 1–267 are amidoligase domain; it reads MSKFVFVTGG…CKETLKYLDL (267 aa). Serine 13 contacts CTP. UTP is bound at residue serine 13. ATP is bound by residues 14–19 and aspartate 71; that span reads SIGKGI. 2 residues coordinate Mg(2+): aspartate 71 and glutamate 141. CTP contacts are provided by residues 148–150, 188–193, and lysine 224; these read DIE and KTKPTQ. Residues 188–193 and lysine 224 contribute to the UTP site; that span reads KTKPTQ. The Glutamine amidotransferase type-1 domain occupies 292–534; the sequence is KVALVGKYIE…IKASQDKLTQ (243 aa). L-glutamine is bound at residue glycine 354. Cysteine 381 serves as the catalytic Nucleophile; for glutamine hydrolysis. L-glutamine contacts are provided by residues 382-385, glutamate 405, and arginine 462; that span reads LGMQ. Residues histidine 507 and glutamate 509 contribute to the active site.

It belongs to the CTP synthase family. As to quaternary structure, homotetramer.

It catalyses the reaction UTP + L-glutamine + ATP + H2O = CTP + L-glutamate + ADP + phosphate + 2 H(+). It carries out the reaction L-glutamine + H2O = L-glutamate + NH4(+). The enzyme catalyses UTP + NH4(+) + ATP = CTP + ADP + phosphate + 2 H(+). The protein operates within pyrimidine metabolism; CTP biosynthesis via de novo pathway; CTP from UDP: step 2/2. With respect to regulation, allosterically activated by GTP, when glutamine is the substrate; GTP has no effect on the reaction when ammonia is the substrate. The allosteric effector GTP functions by stabilizing the protein conformation that binds the tetrahedral intermediate(s) formed during glutamine hydrolysis. Inhibited by the product CTP, via allosteric rather than competitive inhibition. Its function is as follows. Catalyzes the ATP-dependent amination of UTP to CTP with either L-glutamine or ammonia as the source of nitrogen. Regulates intracellular CTP levels through interactions with the four ribonucleotide triphosphates. This is CTP synthase from Prochlorococcus marinus (strain AS9601).